Here is a 250-residue protein sequence, read N- to C-terminus: Probable transcriptional regulatory protein RC1_1808 (250 aa).

Residues 1 to 21 are disordered; that stretch reads MAGHSQFKNIMHRKGAQDAKR.

Belongs to the TACO1 family.

It is found in the cytoplasm. The sequence is that of Probable transcriptional regulatory protein RC1_1808 from Rhodospirillum centenum (strain ATCC 51521 / SW).